The following is a 149-amino-acid chain: UPF0260 protein PFLU_1520 (149 aa).

It belongs to the UPF0260 family.

The chain is UPF0260 protein PFLU_1520 from Pseudomonas fluorescens (strain SBW25).